A 705-amino-acid chain; its full sequence is Lethal(3)malignant brain tumor-like protein 2 (705 aa).

The interval 1-84 is disordered; sequence MEKPRSIEET…GTPRSLDGSG (84 aa). Position 13 is a phosphoserine (Ser13). Residues 15–25 are compositionally biased toward acidic residues; it reads PMEEEEDDDLE. The segment covering 38–49 has biased composition (low complexity); the sequence is SSVGSESSSYLE. Positions 50–60 are enriched in acidic residues; the sequence is ESSEAENEDRE. Ser67 bears the Phosphoserine mark. Position 76 is a phosphothreonine (Thr76). The segment at 81–116 adopts an FCS-type zinc-finger fold; that stretch reads DGSGSEPAVCEMCGIVGTREAFFSKTKRFCSVSCSR. Zn(2+) is bound by residues Cys90, Cys93, Cys110, and Cys114. MBT repeat units follow at residues 179–283, 291–391, 397–500, and 508–604; these read FDWG…LVPP, TDWK…IKMS, MAHH…LTPP, and FNWE…LQPP. Position 338 is a phosphoserine (Ser338). Lys405 participates in a covalent cross-link: Glycyl lysine isopeptide (Lys-Gly) (interchain with G-Cter in SUMO2). The segment at 608 to 665 is disordered; that stretch reads EPATPLKAKEATKKKKKQFGKKRKRIPPTKTRPLRQGSKKPLLEDDPQGARKISSEPV. A compositionally biased stretch (basic residues) spans 619 to 634; the sequence is TKKKKKQFGKKRKRIP. Glycyl lysine isopeptide (Lys-Gly) (interchain with G-Cter in SUMO2) cross-links involve residues Lys647, Lys659, and Lys675. Residues 680–705 are disordered; the sequence is DVASPDKASSPELPVSVENIKQETDD. Residues Ser683, Ser688, and Ser689 each carry the phosphoserine modification. Lys700 participates in a covalent cross-link: Glycyl lysine isopeptide (Lys-Gly) (interchain with G-Cter in SUMO1); alternate. Lys700 is covalently cross-linked (Glycyl lysine isopeptide (Lys-Gly) (interchain with G-Cter in SUMO2); alternate).

In terms of assembly, part of the E2F6.com-1 complex in G0 phase composed of E2F6, MGA, MAX, TFDP1, CBX3, BAT8, EUHMTASE1, RING1, RNF2, MBLR, BAT8 and YAF2.

The protein localises to the nucleus. In terms of biological role, putative Polycomb group (PcG) protein. PcG proteins maintain the transcriptionally repressive state of genes, probably via a modification of chromatin, rendering it heritably changed in its expressibility. Its association with a chromatin-remodeling complex suggests that it may contribute to prevent expression of genes that trigger the cell into mitosis. Binds to monomethylated and dimethylated 'Lys-20' on histone H4. Binds histone H3 peptides that are monomethylated or dimethylated on 'Lys-4', 'Lys-9' or 'Lys-27'. The polypeptide is Lethal(3)malignant brain tumor-like protein 2 (L3MBTL2) (Homo sapiens (Human)).